A 138-amino-acid chain; its full sequence is Nucleoside diphosphate kinase (138 aa).

Lysine 9, phenylalanine 57, arginine 85, threonine 91, arginine 102, and asparagine 112 together coordinate ATP. Catalysis depends on histidine 115, which acts as the Pros-phosphohistidine intermediate.

The protein belongs to the NDK family. In terms of assembly, homotetramer. Mg(2+) is required as a cofactor.

The protein localises to the cytoplasm. It carries out the reaction a 2'-deoxyribonucleoside 5'-diphosphate + ATP = a 2'-deoxyribonucleoside 5'-triphosphate + ADP. It catalyses the reaction a ribonucleoside 5'-diphosphate + ATP = a ribonucleoside 5'-triphosphate + ADP. Its function is as follows. Major role in the synthesis of nucleoside triphosphates other than ATP. The ATP gamma phosphate is transferred to the NDP beta phosphate via a ping-pong mechanism, using a phosphorylated active-site intermediate. In Deinococcus radiodurans (strain ATCC 13939 / DSM 20539 / JCM 16871 / CCUG 27074 / LMG 4051 / NBRC 15346 / NCIMB 9279 / VKM B-1422 / R1), this protein is Nucleoside diphosphate kinase.